Reading from the N-terminus, the 340-residue chain is Small ribosomal subunit biogenesis GTPase RsgA (340 aa).

Basic and acidic residues predominate over residues 20-34; sequence ERAERAERRARRDDT. Residues 20 to 42 are disordered; sequence ERAERAERRARRDDTSLDAGDYG. Residues 116–274 form the CP-type G domain; that stretch reads RGQLKPVAAN…LIDSPGIREF (159 aa). Residues 163 to 166 and 216 to 224 each bind GTP; these read NKTD and GQSGVGKSS. C298, C303, H305, and C311 together coordinate Zn(2+).

Belongs to the TRAFAC class YlqF/YawG GTPase family. RsgA subfamily. Monomer. Associates with 30S ribosomal subunit, binds 16S rRNA. The cofactor is Zn(2+).

The protein resides in the cytoplasm. Functionally, one of several proteins that assist in the late maturation steps of the functional core of the 30S ribosomal subunit. Helps release RbfA from mature subunits. May play a role in the assembly of ribosomal proteins into the subunit. Circularly permuted GTPase that catalyzes slow GTP hydrolysis, GTPase activity is stimulated by the 30S ribosomal subunit. In Chromohalobacter salexigens (strain ATCC BAA-138 / DSM 3043 / CIP 106854 / NCIMB 13768 / 1H11), this protein is Small ribosomal subunit biogenesis GTPase RsgA.